The following is a 642-amino-acid chain: Threonine--tRNA ligase (642 aa).

Positions 1–61 (MPVVTLPDGS…DSDANLAIIT (61 aa)) constitute a TGS domain. Residues 243–534 (DHRKIGKQLD…LTEEYAGFFP (292 aa)) form a catalytic region. Zn(2+)-binding residues include Cys334, His385, and His511.

This sequence belongs to the class-II aminoacyl-tRNA synthetase family. Homodimer. Requires Zn(2+) as cofactor.

It is found in the cytoplasm. It catalyses the reaction tRNA(Thr) + L-threonine + ATP = L-threonyl-tRNA(Thr) + AMP + diphosphate + H(+). In terms of biological role, catalyzes the attachment of threonine to tRNA(Thr) in a two-step reaction: L-threonine is first activated by ATP to form Thr-AMP and then transferred to the acceptor end of tRNA(Thr). Also edits incorrectly charged L-seryl-tRNA(Thr). This chain is Threonine--tRNA ligase, found in Photorhabdus laumondii subsp. laumondii (strain DSM 15139 / CIP 105565 / TT01) (Photorhabdus luminescens subsp. laumondii).